A 396-amino-acid chain; its full sequence is Elongation factor Tu (396 aa).

The 196-residue stretch at 10 to 205 (KPHVNIGTIG…AVDESIPDPV (196 aa)) folds into the tr-type G domain. The segment at 19-26 (GHVDHGKT) is G1. 19-26 (GHVDHGKT) is a binding site for GTP. T26 contributes to the Mg(2+) binding site. Positions 62–66 (GITIN) are G2. Positions 83 to 86 (DAPG) are G3. Residues 83–87 (DAPGH) and 138–141 (NKAD) each bind GTP. The tract at residues 138–141 (NKAD) is G4. A G5 region spans residues 175–177 (SAL).

It belongs to the TRAFAC class translation factor GTPase superfamily. Classic translation factor GTPase family. EF-Tu/EF-1A subfamily. Monomer.

The protein resides in the cytoplasm. The enzyme catalyses GTP + H2O = GDP + phosphate + H(+). In terms of biological role, GTP hydrolase that promotes the GTP-dependent binding of aminoacyl-tRNA to the A-site of ribosomes during protein biosynthesis. This chain is Elongation factor Tu, found in Rhodococcus jostii (strain RHA1).